A 109-amino-acid chain; its full sequence is Cell division protein ZapA (109 aa).

Positions 21–99 (PDQRDALNQA…IEQALLEQGR (79 aa)) form a coiled coil.

This sequence belongs to the ZapA family. Type 1 subfamily. As to quaternary structure, homodimer. Interacts with FtsZ.

The protein resides in the cytoplasm. Functionally, activator of cell division through the inhibition of FtsZ GTPase activity, therefore promoting FtsZ assembly into bundles of protofilaments necessary for the formation of the division Z ring. It is recruited early at mid-cell but it is not essential for cell division. In Shigella boydii serotype 18 (strain CDC 3083-94 / BS512), this protein is Cell division protein ZapA.